The sequence spans 283 residues: Nucleotide-binding protein THEYE_A0235 (283 aa).

Glycine 12–threonine 19 is an ATP binding site. Residue aspartate 62 to valine 65 coordinates GTP.

Belongs to the RapZ-like family.

In terms of biological role, displays ATPase and GTPase activities. The protein is Nucleotide-binding protein THEYE_A0235 of Thermodesulfovibrio yellowstonii (strain ATCC 51303 / DSM 11347 / YP87).